Consider the following 491-residue polypeptide: Serine/threonine-protein kinase 3 (491 aa).

At M1 the chain carries N-acetylmethionine. S15 carries the post-translational modification Phosphoserine; by PLK1. In terms of domain architecture, Protein kinase spans 27 to 278 (FDVLEKLGEG…ATQLLQHPFI (252 aa)). Residues 33 to 41 (LGEGSYGSV) and K56 contribute to the ATP site. Phosphothreonine; by PKB/AKT1 is present on T117. The Proton acceptor role is filled by D146. The Mg(2+) site is built by N151 and D164. T174 and T180 each carry phosphothreonine; by autocatalysis. Positions 287–328 (LRDLITEAMEIKAKRHEEQQRELEEEEENSDEDELDSHTMVK) form a coiled coil. The tract at residues 301 to 327 (RHEEQQRELEEEEENSDEDELDSHTMV) is disordered. Acidic residues predominate over residues 309–321 (LEEEEENSDEDEL). S316 carries the post-translational modification Phosphoserine. 2 positions are modified to phosphothreonine; by autocatalysis: T336 and T378. The tract at residues 370 to 392 (EDEEEEDGTMKRNATSPQVQRPS) is disordered. Residues 381–390 (RNATSPQVQR) are compositionally biased toward polar residues. A Phosphothreonine; by PKB/AKT1 modification is found at T384. Phosphoserine is present on residues S385 and S444. Residues 437 to 484 (FDFLKNLSLEELQMRLKALDPMMEREIEELRQRYTAKRQPILDAMDAK) enclose the SARAH domain. Positions 442-475 (NLSLEELQMRLKALDPMMEREIEELRQRYTAKRQ) form a coiled coil.

Belongs to the protein kinase superfamily. STE Ser/Thr protein kinase family. STE20 subfamily. As to quaternary structure, homodimer; mediated via the coiled-coil region. Interacts with NORE1, which inhibits autoactivation. Interacts with and stabilizes SAV1. Interacts with RAF1, which prevents dimerization and phosphorylation. Interacts with RASSF1. Interacts (via SARAH domain) with isoform 1 of NEK2. Interacts with ESR1 only in the presence of SAV1. Interacts with PKB/AKT1. Forms a tripartite complex with MOBKL1B and STK38. Interacts with RASSF2 (via SARAH domain). Interacts with DLG5 (via PDZ domain 3). Interacts with LATS1; this interaction is inhibited in the presence of DLG5. Interacts with MARK3 in the presence of DLG5. Interacts with RASSF5; this interaction inhibits STK3 autoactivation through heterodimerization. Interacts (when phosphorylated) with SLMAP (via FHA domain); the interaction associates STK3 with the STRIPAK complex. It depends on Mg(2+) as a cofactor. Autophosphorylated on two residues Thr-174 and Thr-180, leading to activation. Phosphorylation at Thr-117 and Thr-384 by PKB/AKT1, leads to inhibition of its: cleavage, kinase activity, autophosphorylation at Thr-180, binding to RASSF1 and nuclear translocation, and increase in its binding to RAF1. Phosphorylated at Ser-15 by PLK1, leading to activation. When autophosphorylated at Thr-180, recruits STRIPAK complex and promotes PP2A-mediated dephosphorylation and inactivation of STK3. In terms of processing, proteolytically cleaved by caspase-3 during apoptosis. Proteolytic cleavage results in kinase activation and nuclear translocation of the truncated form (MST1/N). Post-translationally, ubiquitinated by TRIM69; leading to its redistribution to the perinuclear cytoskeleton, where it is phosphorylated by PLK1 and subsequently activated. In terms of tissue distribution, expressed at high levels in adult kidney, skeletal and placenta tissues and at very low levels in adult heart, lung and brain tissues.

The protein resides in the cytoplasm. The protein localises to the nucleus. Its subcellular location is the cytoskeleton. It is found in the microtubule organizing center. It localises to the centrosome. It catalyses the reaction L-seryl-[protein] + ATP = O-phospho-L-seryl-[protein] + ADP + H(+). It carries out the reaction L-threonyl-[protein] + ATP = O-phospho-L-threonyl-[protein] + ADP + H(+). With respect to regulation, inhibited by the C-terminal non-catalytic region. Activated by caspase-cleavage. Full activation also requires homodimerization and autophosphorylation of Thr-180, which are inhibited by the proto-oncogene product RAF1. Activated by RASSF1 which acts by preventing its dephosphorylation. When autophosphorylated at Thr-180, recruits STRIPAK complex and promotes PP2A-mediated dephosphorylation and inactivation of STK3. In terms of biological role, stress-activated, pro-apoptotic kinase which, following caspase-cleavage, enters the nucleus and induces chromatin condensation followed by internucleosomal DNA fragmentation. Key component of the Hippo signaling pathway which plays a pivotal role in organ size control and tumor suppression by restricting proliferation and promoting apoptosis. The core of this pathway is composed of a kinase cascade wherein STK3/MST2 and STK4/MST1, in complex with its regulatory protein SAV1, phosphorylates and activates LATS1/2 in complex with its regulatory protein MOB1, which in turn phosphorylates and inactivates YAP1 oncoprotein and WWTR1/TAZ. Phosphorylation of YAP1 by LATS2 inhibits its translocation into the nucleus to regulate cellular genes important for cell proliferation, cell death, and cell migration. STK3/MST2 and STK4/MST1 are required to repress proliferation of mature hepatocytes, to prevent activation of facultative adult liver stem cells (oval cells), and to inhibit tumor formation. Phosphorylates NKX2-1. Phosphorylates NEK2 and plays a role in centrosome disjunction by regulating the localization of NEK2 to centrosome, and its ability to phosphorylate CROCC and CEP250. In conjunction with SAV1, activates the transcriptional activity of ESR1 through the modulation of its phosphorylation. Positively regulates RAF1 activation via suppression of the inhibitory phosphorylation of RAF1 on 'Ser-259'. Phosphorylates MOBKL1A and RASSF2. Phosphorylates MOBKL1B on 'Thr-74'. Acts cooperatively with MOBKL1B to activate STK38. The sequence is that of Serine/threonine-protein kinase 3 from Homo sapiens (Human).